Consider the following 613-residue polypeptide: Isocitrate dehydrogenase kinase/phosphatase (613 aa).

ATP-binding positions include 328–334 and lysine 349; that span reads APGIRGL. The active site involves aspartate 384.

This sequence belongs to the AceK family.

The protein resides in the cytoplasm. The catalysed reaction is L-seryl-[isocitrate dehydrogenase] + ATP = O-phospho-L-seryl-[isocitrate dehydrogenase] + ADP + H(+). Functionally, bifunctional enzyme which can phosphorylate or dephosphorylate isocitrate dehydrogenase (IDH) on a specific serine residue. This is a regulatory mechanism which enables bacteria to bypass the Krebs cycle via the glyoxylate shunt in response to the source of carbon. When bacteria are grown on glucose, IDH is fully active and unphosphorylated, but when grown on acetate or ethanol, the activity of IDH declines drastically concomitant with its phosphorylation. The sequence is that of Isocitrate dehydrogenase kinase/phosphatase from Cupriavidus necator (strain ATCC 17699 / DSM 428 / KCTC 22496 / NCIMB 10442 / H16 / Stanier 337) (Ralstonia eutropha).